A 473-amino-acid chain; its full sequence is Anthocyanidin-3-O-glucoside rhamnosyltransferase (473 aa).

It belongs to the UDP-glycosyltransferase family. As to expression, expressed in petals, styles and anthers.

It participates in pigment biosynthesis; anthocyanin biosynthesis. In terms of biological role, controls the rhamnosylation of reddish anthocyanidin-3-O-glucosides, which is the first step in a series of modifications that finally yield magenta or blue/purple coloured anthocyanins. Controls the conversion of anthocyanidin-3-O-glucosides to anthocyanidin-3-O-rutinosides. The polypeptide is Anthocyanidin-3-O-glucoside rhamnosyltransferase (Petunia hybrida (Petunia)).